We begin with the raw amino-acid sequence, 118 residues long: Large ribosomal subunit protein bL21c (118 aa).

The protein belongs to the bacterial ribosomal protein bL21 family. As to quaternary structure, part of the 50S ribosomal subunit.

It localises to the plastid. Its subcellular location is the chloroplast. In terms of biological role, this protein binds to 23S rRNA. This Zygnema circumcarinatum (Green alga) protein is Large ribosomal subunit protein bL21c.